The chain runs to 705 residues: MLTPIIRKFQYGQHTVTIETGMMARQATAAVMVSMDDTAVFVTVVGQKKAKPGQSFFPLTVNYQERTYAAGRIPGSFFRREGRPSEGETLTSRLIDRPIRPLFPDSFLNEVQVIATVVSVNPQINPDIVALIGASAVLSLSGIPFNGPIGAARVGFINDQYVLNPTTDELKESRLDLVVAGTAGAVLMVESEADILSEEQMLGAVVFGHEQQQVVIENINALVAEAGKPKWDWQAEPVNEALHARVAELAEARLGDAYRITEKQERYTQVDAIKADVTEALLAQDDTLDAAEIQDILASVEKNVVRSRVLRGEPRIDGREKDMIRGLDVRTGILPRTHGSALFTRGETQALVTATLGTARDAQNIDELMGERTDSFLLHYNFPPYCVGETGMVGSPKRREIGHGRLAKRGVLAVMPSASEFPYTIRVVSEITESNGSSSMASVCGASLALMDAGVPIKAAVAGIAMGLVKEGDNFVVLSDILGDEDHLGDMDFKVAGSRDGVTALQMDIKIEGITREIMQVALNQAKGARLHILGVMEQAISTPRGDISEFAPRIYTMKINPEKIKDVIGKGGSVIRALTDETGTTIEIEDDGTIKIAATDGDKAKHAIRRIEEITAEIEVGRIYAGKVTRIVDFGAFVAIGGGKEGLVHISQIADKRVEKVTDYLQMGQDVPVKVMEVDRQGRIRLSIKEATTPDAEAPEAAAE.

Mg(2+)-binding residues include aspartate 486 and aspartate 492. A KH domain is found at proline 553–isoleucine 612. Positions glycine 622–lysine 690 constitute an S1 motif domain.

Belongs to the polyribonucleotide nucleotidyltransferase family. In terms of assembly, component of the RNA degradosome, which is a multiprotein complex involved in RNA processing and mRNA degradation. It depends on Mg(2+) as a cofactor.

It is found in the cytoplasm. The enzyme catalyses RNA(n+1) + phosphate = RNA(n) + a ribonucleoside 5'-diphosphate. Functionally, involved in mRNA degradation. Catalyzes the phosphorolysis of single-stranded polyribonucleotides processively in the 3'- to 5'-direction. The protein is Polyribonucleotide nucleotidyltransferase of Yersinia pestis bv. Antiqua (strain Nepal516).